The chain runs to 274 residues: Putative phosphoenolpyruvate synthase regulatory protein (274 aa).

Residue 155–162 (GVSRSGKT) participates in ADP binding.

Belongs to the pyruvate, phosphate/water dikinase regulatory protein family. PSRP subfamily.

The enzyme catalyses [pyruvate, water dikinase] + ADP = [pyruvate, water dikinase]-phosphate + AMP + H(+). It catalyses the reaction [pyruvate, water dikinase]-phosphate + phosphate + H(+) = [pyruvate, water dikinase] + diphosphate. Its function is as follows. Bifunctional serine/threonine kinase and phosphorylase involved in the regulation of the phosphoenolpyruvate synthase (PEPS) by catalyzing its phosphorylation/dephosphorylation. The sequence is that of Putative phosphoenolpyruvate synthase regulatory protein from Laribacter hongkongensis (strain HLHK9).